A 397-amino-acid polypeptide reads, in one-letter code: Elongation factor Tu (397 aa).

A tr-type G domain is found at 10–206; it reads KPHVNIGTIG…HIDTYIPEPT (197 aa). Residues 19–26 are G1; that stretch reads GHVDHGKT. 19–26 provides a ligand contact to GTP; sequence GHVDHGKT. T26 contributes to the Mg(2+) binding site. The interval 61 to 65 is G2; that stretch reads GITIS. Residues 82-85 are G3; the sequence is DCPG. GTP contacts are provided by residues 82–86 and 137–140; these read DCPGH and NKCD. The interval 137–140 is G4; sequence NKCD. The tract at residues 175-177 is G5; the sequence is SAL.

The protein belongs to the TRAFAC class translation factor GTPase superfamily. Classic translation factor GTPase family. EF-Tu/EF-1A subfamily. In terms of assembly, monomer.

The protein resides in the cytoplasm. It catalyses the reaction GTP + H2O = GDP + phosphate + H(+). Functionally, GTP hydrolase that promotes the GTP-dependent binding of aminoacyl-tRNA to the A-site of ribosomes during protein biosynthesis. The chain is Elongation factor Tu from Alkaliphilus oremlandii (strain OhILAs) (Clostridium oremlandii (strain OhILAs)).